The following is a 373-amino-acid chain: D-alanine--D-alanine ligase (373 aa).

The ATP-grasp domain maps to 156–363; it reads KKLLAADGLP…YPTLLATMIE (208 aa). 184–239 is an ATP binding site; sequence CERLGLPVFVKPARGGSSIGVSRVSSWDQLPAAVARARRHDPKVIVEAAISGRELE. The Mg(2+) site is built by Asp318, Glu330, and Asn332.

Belongs to the D-alanine--D-alanine ligase family. Mg(2+) is required as a cofactor. Requires Mn(2+) as cofactor.

Its subcellular location is the cytoplasm. It carries out the reaction 2 D-alanine + ATP = D-alanyl-D-alanine + ADP + phosphate + H(+). Its pathway is cell wall biogenesis; peptidoglycan biosynthesis. Cell wall formation. The sequence is that of D-alanine--D-alanine ligase from Mycobacterium tuberculosis (strain ATCC 25177 / H37Ra).